The following is a 471-amino-acid chain: ATP synthase subunit beta (471 aa).

156 to 163 (GGAGVGKT) is a binding site for ATP.

This sequence belongs to the ATPase alpha/beta chains family. In terms of assembly, F-type ATPases have 2 components, CF(1) - the catalytic core - and CF(0) - the membrane proton channel. CF(1) has five subunits: alpha(3), beta(3), gamma(1), delta(1), epsilon(1). CF(0) has three main subunits: a(1), b(2) and c(9-12). The alpha and beta chains form an alternating ring which encloses part of the gamma chain. CF(1) is attached to CF(0) by a central stalk formed by the gamma and epsilon chains, while a peripheral stalk is formed by the delta and b chains.

It is found in the cell inner membrane. The catalysed reaction is ATP + H2O + 4 H(+)(in) = ADP + phosphate + 5 H(+)(out). In terms of biological role, produces ATP from ADP in the presence of a proton gradient across the membrane. The catalytic sites are hosted primarily by the beta subunits. The sequence is that of ATP synthase subunit beta from Nitratidesulfovibrio vulgaris (strain DSM 19637 / Miyazaki F) (Desulfovibrio vulgaris).